Consider the following 272-residue polypeptide: Ethanolamine ammonia-lyase small subunit (272 aa).

Residues valine 161, glutamate 182, and cysteine 211 each coordinate adenosylcob(III)alamin.

This sequence belongs to the EutC family. As to quaternary structure, the basic unit is a heterodimer which dimerizes to form tetramers. The heterotetramers trimerize; 6 large subunits form a core ring with 6 small subunits projecting outwards. Adenosylcob(III)alamin is required as a cofactor.

Its subcellular location is the bacterial microcompartment. It catalyses the reaction ethanolamine = acetaldehyde + NH4(+). Its pathway is amine and polyamine degradation; ethanolamine degradation. Catalyzes the deamination of various vicinal amino-alcohols to oxo compounds. Allows this organism to utilize ethanolamine as the sole source of nitrogen and carbon in the presence of external vitamin B12. In Pseudomonas putida (strain ATCC 700007 / DSM 6899 / JCM 31910 / BCRC 17059 / LMG 24140 / F1), this protein is Ethanolamine ammonia-lyase small subunit.